An 865-amino-acid polypeptide reads, in one-letter code: cGMP-specific 3',5'-cyclic phosphodiesterase (865 aa).

Low complexity predominate over residues 69–83 (CSCSSQQSSRADSSA). Residues 69–92 (CSCSSQQSSRADSSAPGTPTRKIS) form a disordered region. S92 bears the Phosphoserine mark. 2 GAF domains span residues 154 to 304 (DVTA…GIVL) and 336 to 493 (SLEV…GLGI). Positions 526–850 (ETKELQSLAA…QKWQALAEQQ (325 aa)) constitute a PDEase domain. Catalysis depends on H603, which acts as the Proton donor. Positions 607, 643, 644, and 754 each coordinate Zn(2+). Residue D644 coordinates Mg(2+). Q807 lines the 3',5'-cyclic GMP pocket.

It belongs to the cyclic nucleotide phosphodiesterase family. The cofactor is Zn(2+). Mg(2+) serves as cofactor. In terms of processing, phosphorylation is regulated by binding of cGMP to the two allosteric sites. Phosphorylation by PRKG1 leads to its activation. In terms of tissue distribution, isoform PDE5A1 and isoform PDE5A2 are highly expressed in the cerebellum, hippocampus, retina, lung, heart, spleen, and thoracic artery. Isoform PDE5A1, but not isoform PDE5A2, is also abundantly expressed in the pylorus.

It is found in the cytoplasm. Its subcellular location is the cytosol. The catalysed reaction is 3',5'-cyclic GMP + H2O = GMP + H(+). Its pathway is purine metabolism; 3',5'-cyclic GMP degradation; GMP from 3',5'-cyclic GMP: step 1/1. Inhibited by zaprinast. In terms of biological role, plays a role in signal transduction by regulating the intracellular concentration of cyclic nucleotides. This phosphodiesterase catalyzes the specific hydrolysis of cGMP to 5'-GMP. Specifically regulates nitric-oxide-generated cGMP. In Canis lupus familiaris (Dog), this protein is cGMP-specific 3',5'-cyclic phosphodiesterase (PDE5A).